The chain runs to 246 residues: Histone H1 (246 aa).

2 disordered regions span residues 1–51 (MATD…PTHL) and 105–246 (GGKL…KAKK). Over residues 9-34 (PAPLVDAAPEAPADAPAAPAADANAA) the composition is skewed to low complexity. Residues 35–47 (KAKKATAPKKRAS) are compositionally biased toward basic residues. One can recognise an H15 domain in the interval 49–119 (THLPYAEMVS…KVKNSYKLSS (71 aa)). Basic residues-rich tracts occupy residues 129–189 (AAPK…KAKP) and 198–208 (PLAKKAGRAKA). The span at 224 to 235 (KKAAPSKKAATP) shows a compositional bias: low complexity.

This sequence belongs to the histone H1/H5 family.

The protein localises to the nucleus. Its subcellular location is the chromosome. Its function is as follows. Histones H1 are necessary for the condensation of nucleosome chains into higher-order structures. The polypeptide is Histone H1 (Zea mays (Maize)).